Reading from the N-terminus, the 385-residue chain is Outer membrane protein assembly factor BamB (385 aa).

The N-terminal stretch at 1-20 is a signal peptide; the sequence is MRKVLKKAALCTFGFSMLFG. Cys21 carries the N-palmitoyl cysteine lipid modification. Cys21 is lipidated: S-diacylglycerol cysteine.

This sequence belongs to the BamB family. As to quaternary structure, part of the Bam complex.

Its subcellular location is the cell outer membrane. In terms of biological role, part of the outer membrane protein assembly complex, which is involved in assembly and insertion of beta-barrel proteins into the outer membrane. In Aliivibrio fischeri (strain ATCC 700601 / ES114) (Vibrio fischeri), this protein is Outer membrane protein assembly factor BamB.